Reading from the N-terminus, the 655-residue chain is Gastrulation defective protein 1 homolog (655 aa).

Disordered regions lie at residues 1–54 (MQRG…EQMI) and 83–165 (AKVF…DEQS). 3 stretches are compositionally biased toward basic and acidic residues: residues 23 to 36 (RSNETEAEDAKEST), 91 to 115 (QIEKARVTRPGMDKKREESKPKEDD), and 134 to 146 (TDKEKATKESSKD). Positions 147-164 (EDSDDDDYSSDEDSDDEQ) are enriched in acidic residues. WD repeat units follow at residues 180–219 (HGSRAVLALAGDPSGARLVSGSIDYDMCFWDFAGMDSSMR), 227–268 (CENH…ECCK), 281–321 (GHVA…EQLQ), 330–369 (GLRTNAASCNFNRDATLIAAGCVDGSIQTWDTRKMFVNTT), 377–416 (QKGSEITSIVFSYMGQQLATRSNDETMKLWDLRQFKQPLH), 422–467 (FSRY…EVQR), and 470–510 (VSNA…RGAK). 2 disordered regions span residues 544 to 580 (KSRTSRKRMEKARMDPVKSQRPDLPITSGQGGRVASS) and 633 to 655 (AIFSEKLPADEPATKKPKTEADK). Basic and acidic residues-rich tracts occupy residues 554 to 564 (KARMDPVKSQR) and 639 to 655 (LPADEPATKKPKTEADK).

Belongs to the WD repeat GAD-1 family.

The polypeptide is Gastrulation defective protein 1 homolog (Drosophila melanogaster (Fruit fly)).